The sequence spans 201 residues: MSASLSQLVHQLSARFNNQQQAFDNPPLYAHIVVNCRPLVHLLPGSLLIEQSYAMDPLKPYRIRVLRAQTRDEKLIIFSYSLSDEQKYWGSVYEPERMLKIEEKDLQAIEGCNYIVRKKNSNFIGEVEPGCRCLVDRKGVTTYIVSKFELTNKGEMRTLDRGHNPVTHEQLWGSLGGVFEFNRTTDFSKEIPYDWIEEWKK.

Belongs to the CpcT/CpeT biliprotein lyase family.

The protein localises to the plastid. Its subcellular location is the organellar chromatophore. Functionally, covalently attaches a chromophore to Cys residue(s) of phycobiliproteins. The protein is Chromophore lyase CpcT/CpeT of Paulinella chromatophora.